We begin with the raw amino-acid sequence, 858 residues long: DNA mismatch repair protein MutS (858 aa).

609–616 provides a ligand contact to ATP; that stretch reads GPNMSGKS.

It belongs to the DNA mismatch repair MutS family.

This protein is involved in the repair of mismatches in DNA. It is possible that it carries out the mismatch recognition step. This protein has a weak ATPase activity. The polypeptide is DNA mismatch repair protein MutS (Enterococcus faecalis (strain ATCC 700802 / V583)).